Consider the following 154-residue polypeptide: Fibroblast growth factor 2 (154 aa).

A propeptide spanning residues M1 to L9 is cleaved from the precursor. The segment at M1 to F20 is disordered. N35 is a heparin binding site. Y81 carries the post-translational modification Phosphotyrosine; by TEC. Residue K94 forms a Glycyl lysine isopeptide (Lys-Gly) (interchain with G-Cter in SUMO1) linkage. A heparin-binding region spans residues K127–K143.

This sequence belongs to the heparin-binding growth factors family. In terms of assembly, monomer. Homodimer. Interacts with FGFR1, FGFR2, FGFR3 and FGFR4. Affinity between fibroblast growth factors (FGFs) and their receptors is increased by heparan sulfate glycosaminoglycans that function as coreceptors. Interacts with CSPG4, FGFBP1 and TEC. Found in a complex with FGFBP1, FGF1 and FGF2. Interacts with FGFBP3. Interacts with integrin ITGAV:ITGB3; the interaction is required for FGF2 signaling. Interacts with SNORC (via the extracellular domain). Interacts with GPC3. In terms of processing, phosphorylation at Tyr-81 regulates FGF2 unconventional secretion. As to expression, found in all tissues examined.

It localises to the secreted. The protein localises to the nucleus. In terms of biological role, acts as a ligand for FGFR1, FGFR2, FGFR3 and FGFR4. Also acts as an integrin ligand which is required for FGF2 signaling. Binds to integrin ITGAV:ITGB3. Plays an important role in the regulation of cell survival, cell division, cell differentiation and cell migration. Functions as a potent mitogen in vitro. Can induce angiogenesis. Mediates phosphorylation of ERK1/2 and thereby promotes retinal lens fiber differentiation. The protein is Fibroblast growth factor 2 (Fgf2) of Rattus norvegicus (Rat).